The chain runs to 270 residues: Shikimate dehydrogenase (NADP(+)) (270 aa).

Residues 15–17 (SKS) and Thr-62 each bind shikimate. Lys-66 functions as the Proton acceptor in the catalytic mechanism. Asp-78 is a binding site for NADP(+). Shikimate-binding residues include Asn-87 and Asp-103. Residues 128 to 132 (GAGGA), 152 to 157 (NRTVDR), and Leu-213 each bind NADP(+). Tyr-215 is a shikimate binding site. Position 237 (Gly-237) interacts with NADP(+).

Belongs to the shikimate dehydrogenase family. As to quaternary structure, homodimer.

The enzyme catalyses shikimate + NADP(+) = 3-dehydroshikimate + NADPH + H(+). The protein operates within metabolic intermediate biosynthesis; chorismate biosynthesis; chorismate from D-erythrose 4-phosphate and phosphoenolpyruvate: step 4/7. Functionally, involved in the biosynthesis of the chorismate, which leads to the biosynthesis of aromatic amino acids. Catalyzes the reversible NADPH linked reduction of 3-dehydroshikimate (DHSA) to yield shikimate (SA). The chain is Shikimate dehydrogenase (NADP(+)) from Halorhodospira halophila (strain DSM 244 / SL1) (Ectothiorhodospira halophila (strain DSM 244 / SL1)).